Reading from the N-terminus, the 450-residue chain is 23S rRNA (uracil(1939)-C(5))-methyltransferase RlmD (450 aa).

The 59-residue stretch at 12-70 (SKQLSAKLSLNVDQLDHLGAGIAQYQGKVVFIPGALPDETVTVQLTEQKKNYARAKLIK) folds into the TRAM domain. Positions 83, 89, 92, and 171 each coordinate [4Fe-4S] cluster. 6 residues coordinate S-adenosyl-L-methionine: Q283, F312, N317, E333, D360, and D380. Residue C406 is the Nucleophile of the active site.

It belongs to the class I-like SAM-binding methyltransferase superfamily. RNA M5U methyltransferase family. RlmD subfamily.

The catalysed reaction is uridine(1939) in 23S rRNA + S-adenosyl-L-methionine = 5-methyluridine(1939) in 23S rRNA + S-adenosyl-L-homocysteine + H(+). In terms of biological role, catalyzes the formation of 5-methyl-uridine at position 1939 (m5U1939) in 23S rRNA. This Shewanella sp. (strain W3-18-1) protein is 23S rRNA (uracil(1939)-C(5))-methyltransferase RlmD.